The chain runs to 302 residues: Glycine--tRNA ligase alpha subunit (302 aa).

Belongs to the class-II aminoacyl-tRNA synthetase family. As to quaternary structure, tetramer of two alpha and two beta subunits.

It localises to the cytoplasm. The enzyme catalyses tRNA(Gly) + glycine + ATP = glycyl-tRNA(Gly) + AMP + diphosphate. The polypeptide is Glycine--tRNA ligase alpha subunit (Wigglesworthia glossinidia brevipalpis).